A 110-amino-acid chain; its full sequence is Small ribosomal subunit protein bS16 (110 aa).

A disordered region spans residues 87-110; it reads ARNNPEKAVPRKERKAAAEAAAKK.

This sequence belongs to the bacterial ribosomal protein bS16 family.

This is Small ribosomal subunit protein bS16 from Rhodopseudomonas palustris (strain HaA2).